Consider the following 88-residue polypeptide: Cell division topological specificity factor (88 aa).

The protein belongs to the MinE family.

Prevents the cell division inhibition by proteins MinC and MinD at internal division sites while permitting inhibition at polar sites. This ensures cell division at the proper site by restricting the formation of a division septum at the midpoint of the long axis of the cell. The sequence is that of Cell division topological specificity factor from Escherichia fergusonii (strain ATCC 35469 / DSM 13698 / CCUG 18766 / IAM 14443 / JCM 21226 / LMG 7866 / NBRC 102419 / NCTC 12128 / CDC 0568-73).